The primary structure comprises 134 residues: ATP synthase epsilon chain (134 aa).

The protein belongs to the ATPase epsilon chain family. F-type ATPases have 2 components, CF(1) - the catalytic core - and CF(0) - the membrane proton channel. CF(1) has five subunits: alpha(3), beta(3), gamma(1), delta(1), epsilon(1). CF(0) has three main subunits: a, b and c.

Its subcellular location is the cell membrane. Its function is as follows. Produces ATP from ADP in the presence of a proton gradient across the membrane. The polypeptide is ATP synthase epsilon chain (Alkaliphilus metalliredigens (strain QYMF)).